Consider the following 428-residue polypeptide: Immunoglobulin superfamily containing leucine-rich repeat protein (428 aa).

An N-terminal signal peptide occupies residues 1–18; the sequence is MRALCLLCWAVLLNLVRA. In terms of domain architecture, LRRNT spans 19 to 50; it reads CPEPCDCGEKYGFQIADCAYRDLEGVPPGFPA. N-linked (GlcNAc...) asparagine glycosylation occurs at Asn-51. LRR repeat units lie at residues 51-72, 75-98, 99-122, 123-144, and 147-168; these read NVTT…AFRE, LLQS…APLS, HLKS…HNLS, ALQL…AFSS, and ALRS…TFAP. An LRRCT domain is found at 180 to 231; sequence NPFDCTCGIVWFKTWALASAVSIPEQDNIACTTPHVLKGIPLGRLPPLPCSA. The 112-residue stretch at 232–343 folds into the Ig-like domain; that stretch reads PSVQLSYQPS…GSAESSVNVA (112 aa). An intrachain disulfide couples Cys-257 to Cys-327. A glycan (N-linked (GlcNAc...) asparagine) is linked at Asn-309.

In terms of tissue distribution, detected in thyroid, heart, retina and spinal cord.

It is found in the secreted. The polypeptide is Immunoglobulin superfamily containing leucine-rich repeat protein (Islr) (Mus musculus (Mouse)).